We begin with the raw amino-acid sequence, 317 residues long: Transaldolase (317 aa).

The active-site Schiff-base intermediate with substrate is Lys-126.

Belongs to the transaldolase family. Type 1 subfamily. Homodimer.

It localises to the cytoplasm. The catalysed reaction is D-sedoheptulose 7-phosphate + D-glyceraldehyde 3-phosphate = D-erythrose 4-phosphate + beta-D-fructose 6-phosphate. Its pathway is carbohydrate degradation; pentose phosphate pathway; D-glyceraldehyde 3-phosphate and beta-D-fructose 6-phosphate from D-ribose 5-phosphate and D-xylulose 5-phosphate (non-oxidative stage): step 2/3. In terms of biological role, transaldolase is important for the balance of metabolites in the pentose-phosphate pathway. This Paraburkholderia phytofirmans (strain DSM 17436 / LMG 22146 / PsJN) (Burkholderia phytofirmans) protein is Transaldolase.